A 170-amino-acid chain; its full sequence is Ergosterol biosynthetic protein 28 (170 aa).

Transmembrane regions (helical) follow at residues 7-27, 116-136, and 141-161; these read FLPE…IISI, TLAY…LFVF, and FGLP…WMPL.

This sequence belongs to the ERG28 family. Heterotetramer of ERG25, ERG26, ERG27 and ERG28. ERG28 acts as a scaffold to tether ERG27 and other 4,4-demethylation-related enzymes, forming a demethylation enzyme complex, in the endoplasmic reticulum.

It is found in the endoplasmic reticulum membrane. It functions in the pathway steroid metabolism; ergosterol biosynthesis. Functionally, sterol 24-C-methyltransferase; part of the third module of ergosterol biosynthesis pathway that includes the late steps of the pathway. ERG28 has a role as a scaffold to help anchor the catalytic components of the C-4 demethylation complex ERG25, ERG26 and ERG27 to the endoplasmic reticulum. The third module or late pathway involves the ergosterol synthesis itself through consecutive reactions that mainly occur in the endoplasmic reticulum (ER) membrane. Firstly, the squalene synthase ERG9 catalyzes the condensation of 2 farnesyl pyrophosphate moieties to form squalene, which is the precursor of all steroids. Squalene synthase is crucial for balancing the incorporation of farnesyl diphosphate (FPP) into sterol and nonsterol isoprene synthesis. Secondly, squalene is converted into lanosterol by the consecutive action of the squalene epoxidase ERG1 and the lanosterol synthase ERG7. Then, the delta(24)-sterol C-methyltransferase ERG6 methylates lanosterol at C-24 to produce eburicol. Eburicol is the substrate of the sterol 14-alpha demethylase encoded by CYP51A, CYP51B and CYP51C, to yield 4,4,24-trimethyl ergosta-8,14,24(28)-trienol. CYP51B encodes the enzyme primarily responsible for sterol 14-alpha-demethylation, and plays an essential role in ascospore formation. CYP51A encodes an additional sterol 14-alpha-demethylase, induced on ergosterol depletion and responsible for the intrinsic variation in azole sensitivity. The third CYP51 isoform, CYP51C, does not encode a sterol 14-alpha-demethylase, but is required for full virulence on host wheat ears. The C-14 reductase ERG24 then reduces the C14=C15 double bond which leads to 4,4-dimethylfecosterol. A sequence of further demethylations at C-4, involving the C-4 demethylation complex containing the C-4 methylsterol oxidases ERG25, the sterol-4-alpha-carboxylate 3-dehydrogenase ERG26 and the 3-keto-steroid reductase ERG27, leads to the production of fecosterol via 4-methylfecosterol. ERG28 has a role as a scaffold to help anchor ERG25, ERG26 and ERG27 to the endoplasmic reticulum. The C-8 sterol isomerase ERG2 then catalyzes the reaction which results in unsaturation at C-7 in the B ring of sterols and thus converts fecosterol to episterol. The sterol-C5-desaturases ERG3A and ERG3BB then catalyze the introduction of a C-5 double bond in the B ring to produce 5-dehydroepisterol. The C-22 sterol desaturases ERG5A and ERG5B further convert 5-dehydroepisterol into ergosta-5,7,22,24(28)-tetraen-3beta-ol by forming the C-22(23) double bond in the sterol side chain. Finally, ergosta-5,7,22,24(28)-tetraen-3beta-ol is substrate of the C-24(28) sterol reductase ERG4 to produce ergosterol. In Gibberella zeae (strain ATCC MYA-4620 / CBS 123657 / FGSC 9075 / NRRL 31084 / PH-1) (Wheat head blight fungus), this protein is Ergosterol biosynthetic protein 28.